We begin with the raw amino-acid sequence, 545 residues long: Tetrahydrocannabinolic acid synthase (545 aa).

The first 28 residues, 1 to 28 (MNCSAFSFWFVCKIIFFFLSFHIQISIA), serve as a signal peptide directing secretion. Cys37 and Cys99 are disulfide-bonded. Asn65 and Asn89 each carry an N-linked (GlcNAc...) asparagine glycan. An FAD-binding PCMH-type domain is found at 77-251 (TTPKPLVIVT…AAWKIKLVAV (175 aa)). FAD is bound by residues 109–115 (TRSGGHD) and Ser120. A cross-link (6-(S-cysteinyl)-8alpha-(pros-histidyl)-FAD (His-Cys)) is located at residues 114–176 (HDAEGMSYIS…ENLSFPGGYC (63 aa)). N-linked (GlcNAc...) asparagine glycosylation occurs at Asn168. FAD is bound by residues Cys176, 180-184 (GVGGH), Tyr190, Glu236, and Ile241. Residue His292 coordinates cannabigerolate. 3 N-linked (GlcNAc...) asparagine glycosylation sites follow: Asn297, Asn305, and Asn329. Residues Tyr417 and Glu442 each contribute to the cannabigerolate site. N-linked (GlcNAc...) asparagine glycosylation is present at Asn467. 481–483 (YLN) serves as a coordination point for FAD. The Proton acceptor role is filled by Tyr484. N-linked (GlcNAc...) asparagine glycosylation occurs at Asn499.

The protein belongs to the oxygen-dependent FAD-linked oxidoreductase family. In terms of assembly, monomer. The cofactor is FAD. Glycosylated when produced in a heterologous system. The deglycosylated THCA synthase has more catalytic activity than the glycosylated form. In terms of processing, the FAD cofactor is bound via a bicovalent 6-S-cysteinyl, 8alpha-N1-histidyl FAD linkage. In terms of tissue distribution, expressed in the secretory cells of glandular trichomes.

The protein resides in the secreted. The protein localises to the extracellular space. Its subcellular location is the apoplast. It carries out the reaction cannabigerolate + O2 = Delta(9)-tetrahydrocannabinolate + H2O2. The protein operates within secondary metabolite biosynthesis; terpenoid biosynthesis. With respect to regulation, inhibited by Hg(2+). Oxidoreductase involved in the biosynthesis of cannabinoids-related terpenophenolic natural products, which have pharmacological activity. Catalyzes the oxidative cyclization of the monoterpene moiety in cannabigerolic acid (CBGA), producing delta(9)-tetrahydrocannabinolate (THCA), the major cannabioid in drug-type Cannabis plants. Can also use cannabinerolic acid as substrate, but not cannabigerol or cannabinerol. This chain is Tetrahydrocannabinolic acid synthase, found in Cannabis sativa (Hemp).